The chain runs to 371 residues: tRNA-specific 2-thiouridylase MnmA (371 aa).

ATP is bound by residues 22–29 and methionine 48; that span reads GLSGGVDS. Residues 108–110 form an interaction with target base in tRNA region; that stretch reads NPD. The active-site Nucleophile is the cysteine 113. The cysteines at positions 113 and 209 are disulfide-linked. Glycine 137 is a binding site for ATP. An interaction with tRNA region spans residues 159-161; sequence KDQ. Cysteine 209 (cysteine persulfide intermediate) is an active-site residue.

Belongs to the MnmA/TRMU family.

It is found in the cytoplasm. The enzyme catalyses S-sulfanyl-L-cysteinyl-[protein] + uridine(34) in tRNA + AH2 + ATP = 2-thiouridine(34) in tRNA + L-cysteinyl-[protein] + A + AMP + diphosphate + H(+). Functionally, catalyzes the 2-thiolation of uridine at the wobble position (U34) of tRNA, leading to the formation of s(2)U34. The polypeptide is tRNA-specific 2-thiouridylase MnmA (Coxiella burnetii (strain CbuK_Q154) (Coxiella burnetii (strain Q154))).